A 261-amino-acid polypeptide reads, in one-letter code: 8-demethyl-8-(2,3-dimethoxy-alpha-L-rhamnosyl)-tetracenomycin-C 4'-O-methyltransferase (261 aa).

Residues 53–54, 81–85, 111–115, F167, 185–186, and S191 contribute to the S-adenosyl-L-methionine site; these read TM, ETGVW, DSFEG, and DG. D185 provides a ligand contact to Mg(2+). D212 and D213 together coordinate Mg(2+).

The protein belongs to the methyltransferase TylF/MycF family. Mg(2+) is required as a cofactor.

It carries out the reaction 8-demethyl-8-(2,3-di-O-methyl-alpha-L-rhamnosyl)-tetracenomycin C + S-adenosyl-L-methionine = 8-demethyl-8-(2,3,4-tri-O-methyl-alpha-L-rhamnosyl)-tetracenomycin C + S-adenosyl-L-homocysteine + H(+). The protein operates within antibiotic biosynthesis. Its function is as follows. O-methyltransferase involved in the biosynthesis of the permethylated L-rhamnose moiety of elloramycin, an antitumor polyketide. Mediates the methylation of the hydroxy groups at the 4'-position after the sugar moiety has been attached to the aglycon. The protein is 8-demethyl-8-(2,3-dimethoxy-alpha-L-rhamnosyl)-tetracenomycin-C 4'-O-methyltransferase of Streptomyces olivaceus.